Reading from the N-terminus, the 147-residue chain is Membrane-spanning 4-domains subfamily A member 6E (147 aa).

The Cytoplasmic portion of the chain corresponds to 1 to 52 (MTSQPISNETIIMLPSNVINFSQAEKPEPTNQGQDSLKKRLQAKVKVIGVHS). The helical transmembrane segment at 53–73 (SLAGSILSALSALVGFILLSV) threads the bilayer. The Extracellular portion of the chain corresponds to 74 to 120 (NPAALNPASLQCKLDEKDIPTRLLLSYDYHSPYTMDCHRAKASLAGT). Residues 121–141 (LSLMLVSTVLEFCLAVLTAVL) traverse the membrane as a helical segment. At 142–147 (QWKQTV) the chain is on the cytoplasmic side.

It belongs to the MS4A family. As to expression, expressed by malignant and fetal tissue at very low levels.

It localises to the membrane. Functionally, may be involved in signal transduction as a component of a multimeric receptor complex. This is Membrane-spanning 4-domains subfamily A member 6E (MS4A6E) from Homo sapiens (Human).